The sequence spans 156 residues: Putative pre-16S rRNA nuclease (156 aa).

This sequence belongs to the YqgF nuclease family.

Its subcellular location is the cytoplasm. Functionally, could be a nuclease involved in processing of the 5'-end of pre-16S rRNA. This chain is Putative pre-16S rRNA nuclease, found in Gloeobacter violaceus (strain ATCC 29082 / PCC 7421).